The primary structure comprises 116 residues: UPF0298 protein EF_2453 (116 aa).

This sequence belongs to the UPF0298 family.

The protein localises to the cytoplasm. The protein is UPF0298 protein EF_2453 of Enterococcus faecalis (strain ATCC 700802 / V583).